The primary structure comprises 443 residues: Probable glycine dehydrogenase (decarboxylating) subunit 1 (443 aa).

Belongs to the GcvP family. N-terminal subunit subfamily. As to quaternary structure, the glycine cleavage system is composed of four proteins: P, T, L and H. In this organism, the P 'protein' is a heterodimer of two subunits.

The catalysed reaction is N(6)-[(R)-lipoyl]-L-lysyl-[glycine-cleavage complex H protein] + glycine + H(+) = N(6)-[(R)-S(8)-aminomethyldihydrolipoyl]-L-lysyl-[glycine-cleavage complex H protein] + CO2. In terms of biological role, the glycine cleavage system catalyzes the degradation of glycine. The P protein binds the alpha-amino group of glycine through its pyridoxal phosphate cofactor; CO(2) is released and the remaining methylamine moiety is then transferred to the lipoamide cofactor of the H protein. The protein is Probable glycine dehydrogenase (decarboxylating) subunit 1 of Maridesulfovibrio salexigens (strain ATCC 14822 / DSM 2638 / NCIMB 8403 / VKM B-1763) (Desulfovibrio salexigens).